A 303-amino-acid chain; its full sequence is N-acetylmuramic acid 6-phosphate etherase (303 aa).

Residues 1-21 (MQPSQLRSLTTESRNPNTMGI) are disordered. Residues 58-221 (AYDSISNGGR…STSVMIRQGK (164 aa)) enclose the SIS domain. Glutamate 86 serves as the catalytic Proton donor. Glutamate 117 is an active-site residue.

Belongs to the GCKR-like family. MurNAc-6-P etherase subfamily. As to quaternary structure, homodimer.

It carries out the reaction N-acetyl-D-muramate 6-phosphate + H2O = N-acetyl-D-glucosamine 6-phosphate + (R)-lactate. Its pathway is amino-sugar metabolism; N-acetylmuramate degradation. Its function is as follows. Specifically catalyzes the cleavage of the D-lactyl ether substituent of MurNAc 6-phosphate, producing GlcNAc 6-phosphate and D-lactate. This chain is N-acetylmuramic acid 6-phosphate etherase, found in Bacillus pumilus (strain SAFR-032).